The following is a 445-amino-acid chain: Tubulin beta-1 chain (445 aa).

The short motif at 1–4 is the MREI motif element; it reads MREI. Residues Gln11, Glu69, Ser138, Gly142, Thr143, Gly144, Asn204, and Asn226 each coordinate GTP. Glu69 provides a ligand contact to Mg(2+). The disordered stretch occupies residues 424–445; that stretch reads QYQDATADEQGEFEEEGEEDEA. Positions 429-445 are enriched in acidic residues; the sequence is TADEQGEFEEEGEEDEA. 5-glutamyl polyglutamate is present on Glu438.

Belongs to the tubulin family. In terms of assembly, dimer of alpha and beta chains. A typical microtubule is a hollow water-filled tube with an outer diameter of 25 nm and an inner diameter of 15 nM. Alpha-beta heterodimers associate head-to-tail to form protofilaments running lengthwise along the microtubule wall with the beta-tubulin subunit facing the microtubule plus end conferring a structural polarity. Microtubules usually have 13 protofilaments but different protofilament numbers can be found in some organisms and specialized cells. The cofactor is Mg(2+). Some glutamate residues at the C-terminus are polyglycylated, resulting in polyglycine chains on the gamma-carboxyl group. Glycylation is mainly limited to tubulin incorporated into axonemes (cilia and flagella) whereas glutamylation is prevalent in neuronal cells, centrioles, axonemes, and the mitotic spindle. Both modifications can coexist on the same protein on adjacent residues, and lowering polyglycylation levels increases polyglutamylation, and reciprocally. The precise function of polyglycylation is still unclear. Post-translationally, some glutamate residues at the C-terminus are polyglutamylated, resulting in polyglutamate chains on the gamma-carboxyl group. Polyglutamylation plays a key role in microtubule severing by spastin (SPAST). SPAST preferentially recognizes and acts on microtubules decorated with short polyglutamate tails: severing activity by SPAST increases as the number of glutamates per tubulin rises from one to eight, but decreases beyond this glutamylation threshold. In terms of tissue distribution, highly expressed in skeletal muscle.

It localises to the cytoplasm. It is found in the cytoskeleton. Tubulin is the major constituent of microtubules, a cylinder consisting of laterally associated linear protofilaments composed of alpha- and beta-tubulin heterodimers. Microtubules grow by the addition of GTP-tubulin dimers to the microtubule end, where a stabilizing cap forms. Below the cap, tubulin dimers are in GDP-bound state, owing to GTPase activity of alpha-tubulin. The protein is Tubulin beta-1 chain of Gallus gallus (Chicken).